We begin with the raw amino-acid sequence, 126 residues long: Histone H2B 1.2 (126 aa).

Over residues Met-1–Lys-12 the composition is skewed to low complexity. The interval Met-1–Lys-35 is disordered. Lys-6 and Lys-13 each carry N6-acetyllysine. The residue at position 15 (Ser-15) is a Phosphoserine. N6-acetyllysine occurs at positions 16 and 21. O-linked (GlcNAc) serine glycosylation occurs at Ser-113. Residue Lys-121 forms a Glycyl lysine isopeptide (Lys-Gly) (interchain with G-Cter in ubiquitin) linkage.

It belongs to the histone H2B family. In terms of assembly, the nucleosome is a histone octamer containing two molecules each of H2A, H2B, H3 and H4 assembled in one H3-H4 heterotetramer and two H2A-H2B heterodimers. The octamer wraps approximately 147 bp of DNA. Monoubiquitination of Lys-121 by BRE1 gives a specific tag for epigenetic transcriptional activation and is also prerequisite for histone H3 'Lys-4' and 'Lys-79' methylation. In terms of processing, phosphorylated on Ser-15 during developmentally programmed apoptosis; which may facilitate apoptotic chromatin condensation. Post-translationally, glcNAcylation at Ser-113 promotes monoubiquitination of Lys-121. It fluctuates in response to extracellular glucose, and associates with transcribed genes.

The protein localises to the nucleus. The protein resides in the chromosome. Core component of nucleosome. Nucleosomes wrap and compact DNA into chromatin, limiting DNA accessibility to the cellular machineries which require DNA as a template. Histones thereby play a central role in transcription regulation, DNA repair, DNA replication and chromosomal stability. DNA accessibility is regulated via a complex set of post-translational modifications of histones, also called histone code, and nucleosome remodeling. This is Histone H2B 1.2 from Xenopus laevis (African clawed frog).